A 996-amino-acid chain; its full sequence is Cilia- and flagella-associated protein 251 (996 aa).

11 WD repeats span residues 73–114 (GHCN…PKKT), 118–164 (PHPN…EPCL), 168–211 (EFDR…KGFN), 219–258 (PSLK…EKVD), 282–319 (KGSN…IAWF), 399–438 (SIVS…SVLS), 445–485 (TDKE…WQNS), 494–533 (QGKP…FDVN), 547–593 (IHHS…YSKQ), 615–658 (EQET…FKFC), and 719–759 (AHPD…LEQI). The interval 971–996 (DLEGEERDDNIEDQYEDEENEEYDQD) is disordered.

The protein localises to the cell projection. The protein resides in the cilium. Its function is as follows. As component of a spoke-associated complex, regulates ciliary mobility by mediating a stable and functional assembly of the radial spoke 3 (RS3). In Tetrahymena thermophila (strain SB210), this protein is Cilia- and flagella-associated protein 251.